The chain runs to 98 residues: Hainantoxin-XVII.2 (98 aa).

A signal peptide spans 1 to 40 (MTTVGVSLFRRSPEKITMKIAAFLGLSFLLIASYVLICEA). A propeptide spanning residues 41-64 (QHPGFQELLILEENMRDPENSKER) is cleaved from the precursor. 3 disulfides stabilise this stretch: Cys66–Cys81, Cys73–Cys85, and Cys80–Cys95.

The protein belongs to the hainantoxin family. 17 subfamily. As to expression, expressed by the venom gland.

Its subcellular location is the secreted. Its function is as follows. Putative ion channel inhibitor. The sequence is that of Hainantoxin-XVII.2 from Cyriopagopus hainanus (Chinese bird spider).